A 413-amino-acid polypeptide reads, in one-letter code: NAD-dependent dihydropyrimidine dehydrogenase subunit PreT (413 aa).

NAD(+) is bound at residue glutamate 287.

This sequence belongs to the NADH dehydrogenase family. In terms of assembly, heterotetramer of 2 PreA and 2 PreT subunits.

It carries out the reaction 5,6-dihydrouracil + NAD(+) = uracil + NADH + H(+). The enzyme catalyses 5,6-dihydrothymine + NAD(+) = thymine + NADH + H(+). Involved in pyrimidine base degradation. Catalyzes physiologically the reduction of uracil to 5,6-dihydrouracil (DHU) by using NADH as a specific cosubstrate. It also catalyzes the reverse reaction and the reduction of thymine to 5,6-dihydrothymine (DHT). In Salmonella typhimurium (strain LT2 / SGSC1412 / ATCC 700720), this protein is NAD-dependent dihydropyrimidine dehydrogenase subunit PreT (preT).